A 480-amino-acid chain; its full sequence is Argininosuccinate lyase (480 aa).

This sequence belongs to the lyase 1 family. Argininosuccinate lyase subfamily.

Its subcellular location is the cytoplasm. The enzyme catalyses 2-(N(omega)-L-arginino)succinate = fumarate + L-arginine. It functions in the pathway amino-acid biosynthesis; L-arginine biosynthesis; L-arginine from L-ornithine and carbamoyl phosphate: step 3/3. In Ruthia magnifica subsp. Calyptogena magnifica, this protein is Argininosuccinate lyase.